The primary structure comprises 373 residues: Dual-specificity RNA methyltransferase RlmN (373 aa).

The active-site Proton acceptor is the E94. Residues 100–339 form the Radical SAM core domain; sequence EDDRATLCVS…VIVRKTRGDD (240 aa). The cysteines at positions 107 and 344 are disulfide-linked. Residues C114, C118, and C121 each contribute to the [4Fe-4S] cluster site. Residues 168 to 169, S200, 222 to 224, and N301 each bind S-adenosyl-L-methionine; these read GE and SIH. C344 (S-methylcysteine intermediate) is an active-site residue.

Belongs to the radical SAM superfamily. RlmN family. [4Fe-4S] cluster is required as a cofactor.

It localises to the cytoplasm. It carries out the reaction adenosine(2503) in 23S rRNA + 2 reduced [2Fe-2S]-[ferredoxin] + 2 S-adenosyl-L-methionine = 2-methyladenosine(2503) in 23S rRNA + 5'-deoxyadenosine + L-methionine + 2 oxidized [2Fe-2S]-[ferredoxin] + S-adenosyl-L-homocysteine. The enzyme catalyses adenosine(37) in tRNA + 2 reduced [2Fe-2S]-[ferredoxin] + 2 S-adenosyl-L-methionine = 2-methyladenosine(37) in tRNA + 5'-deoxyadenosine + L-methionine + 2 oxidized [2Fe-2S]-[ferredoxin] + S-adenosyl-L-homocysteine. In terms of biological role, specifically methylates position 2 of adenine 2503 in 23S rRNA and position 2 of adenine 37 in tRNAs. m2A2503 modification seems to play a crucial role in the proofreading step occurring at the peptidyl transferase center and thus would serve to optimize ribosomal fidelity. The chain is Dual-specificity RNA methyltransferase RlmN from Shewanella denitrificans (strain OS217 / ATCC BAA-1090 / DSM 15013).